A 183-amino-acid polypeptide reads, in one-letter code: MRKLPRPFYERDTVLVAKELLGKYLVHHDGLEEKIGRIVEVEAYLGQHDLACHSSKGLTKRTKVMFGPAGYAYVYLIYGMYYCMNVVTEKEGVGSAVLIRALEPIKNIQDRTQGPGLLSKAMRIDSKLNHRDLLSNDFYIAEPYGPTDFTIIEKPRIGVHYAKEWADALLRFYIKDNPYISKT.

Belongs to the DNA glycosylase MPG family.

This Legionella pneumophila (strain Lens) protein is Putative 3-methyladenine DNA glycosylase.